Reading from the N-terminus, the 412-residue chain is Polyferredoxin protein MvhB (412 aa).

4Fe-4S ferredoxin-type domains are found at residues 1-29, 30-57, 67-96, 97-127, 138-166, 168-197, 207-236, 238-266, 276-305, 314-345, 357-386, and 385-412; these read MIVVNKEDCIRCGACQGTCPTAAIEVTPE, DVIYCDICGGEPKCVDACPTGALKIEDL, GRIVFNPDKCNECGDCVEVCPPQILKLDEG, KVKKIPLQGFCVMCQKCVDICPVGVIGVEGI, EGPIFIADCVGCGMCVPECPVDAITLEKV, GVIEIDEDTCIKCGVCAQTCPWNAVYISGK, RKFELDEEACIGCNTCVEACPGDFIVPKSS, LTVELPAICTACGLCEQLCPVDAIDLDVE, EGLVWDEGKCDFIGACANICPNDAIRVVTR, EKVDEEPSFAMCTRCGACTMACPKGALSLVDM, KRVQYNPALCDQCGDCIEACPYDMLKLTDE, and DEKVPLKGFCILCDQCIPACPKGALSLK. Cys-9, Cys-12, Cys-15, and Cys-19 together coordinate [4Fe-4S] cluster. [4Fe-4S] cluster contacts are provided by Cys-76, Cys-79, Cys-82, Cys-86, Cys-107, Cys-110, Cys-113, Cys-117, Cys-146, Cys-149, Cys-152, Cys-156, Cys-177, Cys-180, Cys-183, Cys-187, Cys-216, Cys-219, Cys-222, Cys-226, Cys-246, Cys-249, Cys-252, and Cys-256. Positions 325, 328, 331, 335, 366, 369, 372, 376, 394, 397, 400, and 404 each coordinate [4Fe-4S] cluster.

[4Fe-4S] cluster serves as cofactor.

The polypeptide is Polyferredoxin protein MvhB (mvhB) (Methanothermobacter marburgensis (strain ATCC BAA-927 / DSM 2133 / JCM 14651 / NBRC 100331 / OCM 82 / Marburg) (Methanobacterium thermoautotrophicum)).